Consider the following 479-residue polypeptide: Solute carrier family 7 member 13 (479 aa).

Topologically, residues 1 to 14 are cytoplasmic; sequence MAMDIEKKIYLKRQ. Residues 15–35 form a helical membrane-spanning segment; sequence LGYFWGTNFLIINIIGAGIFV. Residues 36 to 47 are Extracellular-facing; sequence SPKGVLQYSSMN. Residues 48 to 68 traverse the membrane as a helical segment; the sequence is VGVSLCVWVFCAVLSMTSTLC. The Cytoplasmic segment spans residues 69–89; that stretch reads AAEIGITFPYTVAHYYFLKRC. Residues 90–110 traverse the membrane as a helical segment; the sequence is FGPFVAFLRLWTSLFTGPGVL. Residues 111–129 lie on the Extracellular side of the membrane; it reads ASQALLLAEYGIQPFYPSC. Residues 130–150 traverse the membrane as a helical segment; sequence SAPAVPKKCLALAMLWIVGIL. At 151–165 the chain is on the cytoplasmic side; that stretch reads NSRGVKELSWLQTVS. A helical membrane pass occupies residues 166–186; sequence MVLKMGILSFISLSGLFLLVT. The Extracellular segment spans residues 187-208; sequence GRKENVRRLQNAFDAEFPEVSR. Residues 209–229 traverse the membrane as a helical segment; it reads LIEAIFQGYFAFSGGGSFTYV. Over 230 to 242 the chain is Cytoplasmic; that stretch reads AGELKEPSKTIPR. The chain crosses the membrane as a helical span at residues 243-263; the sequence is CIFTALPLVTVVYLLANLSYL. The Extracellular segment spans residues 264-289; sequence TVLSPQELLSSDAVALTWTDRVIPQL. A helical transmembrane segment spans residues 290–310; the sequence is TWSVPFAISASLFSNLVTSVF. Topologically, residues 311 to 338 are cytoplasmic; the sequence is ETSRTSYIASRNGQLPLLCSTLNVHSSP. Residues 339 to 359 form a helical membrane-spanning segment; it reads FIAVLLDVSMGSIAIVLTNLI. A topological domain (extracellular) is located at residue Glu-360. A helical transmembrane segment spans residues 361 to 381; the sequence is LINYLFFVFSIWTVLSVIGIL. The Cytoplasmic segment spans residues 382-396; that stretch reads KLRYQEPNLHRPYKV. Residues 397 to 417 traverse the membrane as a helical segment; the sequence is FSPFLFITAAISLSMVLIPLI. At 418-423 the chain is on the extracellular side; that stretch reads KSPKMQ. A helical membrane pass occupies residues 424 to 444; the sequence is YIYVFLFFLGGLLFYVPLIHF. At 445-479 the chain is on the cytoplasmic side; sequence KLKLIWFQKLTCYLQLLFNICIPDVSDEHVAEEES.

Belongs to the amino acid-polyamine-organocation (APC) superfamily. Disulfide-linked heterodimer composed of the catalytic light subunit SLC7A13 and the heavy subunit SLC3A1.

It is found in the apical cell membrane. The catalysed reaction is L-cystine(out) + L-aspartate(in) = L-cystine(in) + L-aspartate(out). It carries out the reaction L-cystine(out) = L-cystine(in). The enzyme catalyses L-aspartate(in) + L-glutamate(out) = L-aspartate(out) + L-glutamate(in). It catalyses the reaction L-aspartate(in) + L-glutamine(out) = L-aspartate(out) + L-glutamine(in). The catalysed reaction is L-aspartate(in) + L-methionine(out) = L-aspartate(out) + L-methionine(in). It carries out the reaction L-leucine(out) + L-aspartate(in) = L-leucine(in) + L-aspartate(out). The enzyme catalyses L-valine(out) + L-aspartate(in) = L-valine(in) + L-aspartate(out). It catalyses the reaction L-aspartate(in) + L-phenylalanine(out) = L-aspartate(out) + L-phenylalanine(in). The catalysed reaction is L-tyrosine(out) + L-aspartate(in) = L-tyrosine(in) + L-aspartate(out). It carries out the reaction L-tryptophan(out) + L-aspartate(in) = L-tryptophan(in) + L-aspartate(out). Functionally, associates with SLC3A1/rBAT to form a functional heterodimeric complex that transports anionic and neutral amino acids across the apical plasma membrane of renal epithelium. Preferentially mediates exchange transport, but can also operate via facilitated diffusion. May act as a major transporter for L-cystine in late proximal tubules, ensuring its reabsorption from the luminal fluid in exchange for cytosolic L-glutamate or L-aspartate. This is Solute carrier family 7 member 13 (Slc7a13) from Rattus norvegicus (Rat).